The sequence spans 467 residues: 3-isopropylmalate dehydratase large subunit (467 aa).

Residues C348, C409, and C412 each coordinate [4Fe-4S] cluster. The interval 423–448 (NERSISTSNRNFEGRQGKGSRTHLAS) is disordered.

Belongs to the aconitase/IPM isomerase family. LeuC type 1 subfamily. Heterodimer of LeuC and LeuD. [4Fe-4S] cluster is required as a cofactor.

It carries out the reaction (2R,3S)-3-isopropylmalate = (2S)-2-isopropylmalate. It participates in amino-acid biosynthesis; L-leucine biosynthesis; L-leucine from 3-methyl-2-oxobutanoate: step 2/4. Its function is as follows. Catalyzes the isomerization between 2-isopropylmalate and 3-isopropylmalate, via the formation of 2-isopropylmaleate. In Bifidobacterium longum (strain DJO10A), this protein is 3-isopropylmalate dehydratase large subunit.